Consider the following 167-residue polypeptide: SsrA-binding protein (167 aa).

The interval 139 to 167 (QAHDKRHAEKEREWQRDKQRIMRAHNRNA) is disordered. Positions 144 to 158 (RHAEKEREWQRDKQR) are enriched in basic and acidic residues.

The protein belongs to the SmpB family.

The protein localises to the cytoplasm. Its function is as follows. Required for rescue of stalled ribosomes mediated by trans-translation. Binds to transfer-messenger RNA (tmRNA), required for stable association of tmRNA with ribosomes. tmRNA and SmpB together mimic tRNA shape, replacing the anticodon stem-loop with SmpB. tmRNA is encoded by the ssrA gene; the 2 termini fold to resemble tRNA(Ala) and it encodes a 'tag peptide', a short internal open reading frame. During trans-translation Ala-aminoacylated tmRNA acts like a tRNA, entering the A-site of stalled ribosomes, displacing the stalled mRNA. The ribosome then switches to translate the ORF on the tmRNA; the nascent peptide is terminated with the 'tag peptide' encoded by the tmRNA and targeted for degradation. The ribosome is freed to recommence translation, which seems to be the essential function of trans-translation. This Xylella fastidiosa (strain M12) protein is SsrA-binding protein.